Here is a 144-residue protein sequence, read N- to C-terminus: Large ribosomal subunit protein uL15 (144 aa).

The interval 1-48 is disordered; sequence MIKLESLQDPSPRKRRTKLLGRGPSSGHGKTSCRGHKGDGSRSGYKRR.

The protein belongs to the universal ribosomal protein uL15 family. As to quaternary structure, part of the 50S ribosomal subunit.

In terms of biological role, binds to the 23S rRNA. The protein is Large ribosomal subunit protein uL15 of Chlamydia caviae (strain ATCC VR-813 / DSM 19441 / 03DC25 / GPIC) (Chlamydophila caviae).